The primary structure comprises 380 residues: Succinate--CoA ligase [ADP-forming] subunit beta (380 aa).

The ATP-grasp domain maps to 9–237 (RDLLARFGIP…PSAEPEAERR (229 aa)). Residues K45, 52–54 (GRG), V94, and E99 each bind ATP. The Mg(2+) site is built by N192 and D206. Residues N257 and 314–316 (GIT) each bind substrate.

It belongs to the succinate/malate CoA ligase beta subunit family. In terms of assembly, heterotetramer of two alpha and two beta subunits. The cofactor is Mg(2+).

The catalysed reaction is succinate + ATP + CoA = succinyl-CoA + ADP + phosphate. It carries out the reaction GTP + succinate + CoA = succinyl-CoA + GDP + phosphate. Its pathway is carbohydrate metabolism; tricarboxylic acid cycle; succinate from succinyl-CoA (ligase route): step 1/1. Succinyl-CoA synthetase functions in the citric acid cycle (TCA), coupling the hydrolysis of succinyl-CoA to the synthesis of either ATP or GTP and thus represents the only step of substrate-level phosphorylation in the TCA. The beta subunit provides nucleotide specificity of the enzyme and binds the substrate succinate, while the binding sites for coenzyme A and phosphate are found in the alpha subunit. This Chloroflexus aurantiacus (strain ATCC 29366 / DSM 635 / J-10-fl) protein is Succinate--CoA ligase [ADP-forming] subunit beta.